The chain runs to 485 residues: Serine/threonine-protein kinase 4 (485 aa).

The region spanning 30 to 281 is the Protein kinase domain; it reads FDVLEKLGEG…ATELLQHPFI (252 aa). Residues 36–44 and K59 each bind ATP; that span reads LGEGSYGSV. D149 functions as the Proton acceptor in the catalytic mechanism. Residue T183 is modified to Phosphothreonine; by autocatalysis. The stretch at 287-313 forms a coiled coil; sequence ESILRHLINEAQDAKLKRTELKQREVE. In terms of domain architecture, SARAH spans 431 to 478; that stretch reads YSFLKDWSVTELQLRLNSLDPMMEQEIEEIHHKYQAKRQPILEAIESK.

This sequence belongs to the protein kinase superfamily. STE Ser/Thr protein kinase family. STE20 subfamily. As to quaternary structure, homodimer; mediated via the coiled-coil region. It depends on Mg(2+) as a cofactor. Autophosphorylated on Thr-183. In terms of processing, proteolytically cleaved by caspase-3 during apoptosis at Asp-326 resulting in a 37 kDa form. Proteolytic cleavage results in kinase activation and nuclear translocation of the truncated form (MST1/N).

The protein resides in the cytoplasm. It localises to the nucleus. It carries out the reaction L-seryl-[protein] + ATP = O-phospho-L-seryl-[protein] + ADP + H(+). The enzyme catalyses L-threonyl-[protein] + ATP = O-phospho-L-threonyl-[protein] + ADP + H(+). Its activity is regulated as follows. The C-terminal non-catalytic region inhibits the kinase activity, the enzyme is activated by caspase-cleavage. Homodimerization and autophosphorylation of Thr-183 is also required for full activation. Its function is as follows. Stress-activated, pro-apoptotic kinase which, following caspase-cleavage, enters the nucleus and induces chromatin condensation followed by internucleosomal DNA fragmentation. Key component of the Hippo signaling pathway which plays a pivotal role in organ size control and tumor suppression by restricting proliferation and promoting apoptosis. The core of this pathway is composed of a kinase cascade wherein stk3/mst2 and stk4/mst1, in complex with its regulatory protein sav1, phosphorylates and activates lats1/2 in complex with its regulatory protein mob1, which in turn phosphorylates and inactivates yap1 oncoprotein and wwtr1/taz. Phosphorylation of yap1 by lats2 inhibits its translocation into the nucleus to regulate cellular genes important for cell proliferation, cell death, and cell migration. Phosphorylates 'Ser-14' of histone H2B (H2BS14ph) during apoptosis. This Xenopus tropicalis (Western clawed frog) protein is Serine/threonine-protein kinase 4 (stk4).